The primary structure comprises 636 residues: Threonine--tRNA ligase (636 aa).

The TGS domain occupies 1–63; that stretch reads MSSISIALPD…KDDSRVEIIT (63 aa). The interval 243–534 is catalytic; sequence DHRRLGRELD…LIEHYAGNFP (292 aa). Zn(2+) contacts are provided by C335, H386, and H511.

This sequence belongs to the class-II aminoacyl-tRNA synthetase family. In terms of assembly, homodimer. Zn(2+) serves as cofactor.

It is found in the cytoplasm. The enzyme catalyses tRNA(Thr) + L-threonine + ATP = L-threonyl-tRNA(Thr) + AMP + diphosphate + H(+). Catalyzes the attachment of threonine to tRNA(Thr) in a two-step reaction: L-threonine is first activated by ATP to form Thr-AMP and then transferred to the acceptor end of tRNA(Thr). Also edits incorrectly charged L-seryl-tRNA(Thr). The polypeptide is Threonine--tRNA ligase (Pelobacter propionicus (strain DSM 2379 / NBRC 103807 / OttBd1)).